Consider the following 512-residue polypeptide: Cytochrome P450 26B1 (512 aa).

C441 is a heme binding site.

It belongs to the cytochrome P450 family. Heme is required as a cofactor.

It is found in the endoplasmic reticulum membrane. The protein resides in the microsome membrane. It carries out the reaction all-trans-retinoate + reduced [NADPH--hemoprotein reductase] + O2 = all-trans-4-hydroxyretinoate + oxidized [NADPH--hemoprotein reductase] + H2O + H(+). It catalyses the reaction all-trans-retinoate + reduced [NADPH--hemoprotein reductase] + O2 = all-trans-18-hydroxyretinoate + oxidized [NADPH--hemoprotein reductase] + H2O + H(+). In terms of biological role, a cytochrome P450 monooxygenase involved in the metabolism of retinoates (RAs), the active metabolites of vitamin A, and critical signaling molecules in animals. RAs exist as at least four different isomers: all-trans-RA (atRA), 9-cis-RA, 13-cis-RA, and 9,13-dicis-RA, where atRA is considered to be the biologically active isomer, although 9-cis-RA and 13-cis-RA also have activity. Catalyzes the hydroxylation of atRA primarily at C-4 and C-18, thereby contributing to the regulation of atRA homeostasis and signaling. Hydroxylation of atRA limits its biological activity and initiates a degradative process leading to its eventual elimination. Involved in the convertion of atRA to all-trans-4-oxo-RA. Can oxidize all-trans-13,14-dihydroretinoate (DRA) to metabolites which could include all-trans-4-oxo-DRA, all-trans-4-hydroxy-DRA, all-trans-5,8-epoxy-DRA, and all-trans-18-hydroxy-DRA. Shows preference for the following substrates: atRA &gt; 9-cis-RA &gt; 13-cis-RA. Plays a central role in germ cell development: acts by degrading RAs in the developing testis, preventing STRA8 expression, thereby leading to delay of meiosis. Required for the maintenance of the undifferentiated state of male germ cells during embryonic development in Sertoli cells, inducing arrest in G0 phase of the cell cycle and preventing meiotic entry. Plays a role in skeletal development, both at the level of patterning and in the ossification of bone and the establishment of some synovial joints. Essential for postnatal survival. Also has a significant activity in oxidation of tazarotenic acid and may therefore metabolize that xenobiotic in vivo. The polypeptide is Cytochrome P450 26B1 (Cyp26b1) (Rattus norvegicus (Rat)).